Reading from the N-terminus, the 611-residue chain is Protein decapping 5 (611 aa).

In terms of domain architecture, Sm spans 9 to 92; that stretch reads KSSSAADSYV…IKDLQVKASP (84 aa). Disordered regions lie at residues 111-153, 183-238, 264-301, 318-362, 396-455, and 519-611; these read HYPS…AMPL, GLPQ…PSSL, SSSLQSTLQSAPSPSLASEMAPPLLSNKAPITAPPTLP, EAST…DKPK, QVSS…AGRS, and FFDS…NRTT. Composition is skewed to polar residues over residues 117-140 and 203-214; these read PTSGSLPSTASGSLPDISSHNGQP and NSLQQPLQYPNF. Residues 264-281 are compositionally biased toward low complexity; the sequence is SSSLQSTLQSAPSPSLAS. 3 stretches are compositionally biased toward polar residues: residues 318 to 330, 396 to 413, and 424 to 437; these read EASTGLPLSNKPS, QVSSSAGLEQSVPVTSEA, and ARPTQKPNGHSFPN. The segment covering 441–453 has biased composition (basic residues); the sequence is YRGRGRGRGRGAG. Residues 453–489 enclose the DFDF domain; that stretch reads GRSHQVMKFTEDFDFTAMNEKFNKDEVWGHLGKSTTL. Positions 512–527 match the FFD box motif; it reads PVYNKDDFFDSLSSNT. A compositionally biased stretch (basic and acidic residues) spans 528–547; it reads IDRESQNSRPRFSEQRKLDT. The TFG box signature appears at 534 to 554; the sequence is NSRPRFSEQRKLDTETFGEFS. Residues 559–604 show a composition bias toward gly residues; the sequence is GRGGRGGYGRNNGYSRGGYGGRGYGGYGGRGGGGGGYGYGGRGQGR.

The protein belongs to the LSM14 family. In terms of assembly, homodimer. Component of the decapping complex. Interacts with DCP1 and DCP2.

It localises to the cytoplasm. Its subcellular location is the P-body. Functionally, as a component of the decapping complex, involved in the degradation of mRNAs. Promotes P-body formation. Translational repressor. This is Protein decapping 5 (DCP5) from Arabidopsis thaliana (Mouse-ear cress).